The sequence spans 118 residues: Holo-[acyl-carrier-protein] synthase (118 aa).

Aspartate 8 and glutamate 58 together coordinate Mg(2+).

It belongs to the P-Pant transferase superfamily. AcpS family. Mg(2+) serves as cofactor.

It is found in the cytoplasm. The enzyme catalyses apo-[ACP] + CoA = holo-[ACP] + adenosine 3',5'-bisphosphate + H(+). Transfers the 4'-phosphopantetheine moiety from coenzyme A to a Ser of acyl-carrier-protein. In Streptococcus pyogenes serotype M5 (strain Manfredo), this protein is Holo-[acyl-carrier-protein] synthase.